The chain runs to 366 residues: Ribosomal RNA large subunit methyltransferase M (366 aa).

Residues Ser188, Cys221–Gly224, Asp240, Asp260, and Asp277 contribute to the S-adenosyl-L-methionine site. Lys306 functions as the Proton acceptor in the catalytic mechanism.

The protein belongs to the class I-like SAM-binding methyltransferase superfamily. RNA methyltransferase RlmE family. RlmM subfamily. In terms of assembly, monomer.

The protein localises to the cytoplasm. The catalysed reaction is cytidine(2498) in 23S rRNA + S-adenosyl-L-methionine = 2'-O-methylcytidine(2498) in 23S rRNA + S-adenosyl-L-homocysteine + H(+). Catalyzes the 2'-O-methylation at nucleotide C2498 in 23S rRNA. This is Ribosomal RNA large subunit methyltransferase M from Pectobacterium carotovorum subsp. carotovorum (strain PC1).